A 165-amino-acid chain; its full sequence is Endoribonuclease YbeY (165 aa).

The Zn(2+) site is built by His130, His134, and His140.

The protein belongs to the endoribonuclease YbeY family. It depends on Zn(2+) as a cofactor.

The protein localises to the cytoplasm. Single strand-specific metallo-endoribonuclease involved in late-stage 70S ribosome quality control and in maturation of the 3' terminus of the 16S rRNA. In Streptococcus pneumoniae serotype 2 (strain D39 / NCTC 7466), this protein is Endoribonuclease YbeY.